Here is a 416-residue protein sequence, read N- to C-terminus: MAQRVCIIGAGVVGLATAYALVREGFDVTLVEARERGGLETSYANGGQLSYRYVAPLADSGVPAQALGWLLRNDAPLRLRPRLDPAQWRWLLGFLAACRGSLNRRNAAHLLRLALLSQRTLQDWREEDGLDGFDWRRNGKLVAFRQPASFARARQGLADPSAQFVLTAAECLALEPALSAAPFVGGIHTPDEEVADCHAFCVQLAERLQASGHCRQLHGRRVTKIVEGGAAVRGVEVGGDLIEADHVVLAAGYRSAELMLPGLRLPLYPLKGYSLTLPVGAQHRAPDTSITDYDRKIVYARIGERLRIAAMVDIVGFDPGLEPARLALLRQQARDTFPQGGDFDAAVEWAGMRPATPTGVPLVGNGGYRNLWLNLGHGALGFTLACGSGRLLAEQIGRRPPSIDTTGLLPRGALAG.

FAD is bound at residue 5–19 (VCIIGAGVVGLATAY).

The protein belongs to the DadA oxidoreductase family. FAD is required as a cofactor.

It catalyses the reaction a D-alpha-amino acid + A + H2O = a 2-oxocarboxylate + AH2 + NH4(+). Its function is as follows. Oxidative deamination of D-amino acids. The protein is D-amino acid dehydrogenase 2 (dadA2) of Pseudomonas aeruginosa (strain ATCC 15692 / DSM 22644 / CIP 104116 / JCM 14847 / LMG 12228 / 1C / PRS 101 / PAO1).